Consider the following 131-residue polypeptide: D-ribose pyranase (131 aa).

Histidine 20 (proton donor) is an active-site residue. Substrate is bound by residues aspartate 28, histidine 98, and tyrosine 120–asparagine 122.

Belongs to the RbsD / FucU family. RbsD subfamily. As to quaternary structure, homodecamer.

It is found in the cytoplasm. It carries out the reaction beta-D-ribopyranose = beta-D-ribofuranose. The protein operates within carbohydrate metabolism; D-ribose degradation; D-ribose 5-phosphate from beta-D-ribopyranose: step 1/2. Its function is as follows. Catalyzes the interconversion of beta-pyran and beta-furan forms of D-ribose. In Coprothermobacter proteolyticus (strain ATCC 35245 / DSM 5265 / OCM 4 / BT), this protein is D-ribose pyranase.